A 72-amino-acid chain; its full sequence is Conotoxin VnMKLT2-011 (72 aa).

The N-terminal stretch at 1-23 (MMKLTCVLIIAVLFLTACQLTTA) is a signal peptide. Residues 24–42 (ETRDEYRAVRSSDEVRNSR) constitute a propeptide that is removed on maturation. 3 disulfide bridges follow: C44-C57, C51-C62, and C56-C71.

Belongs to the conotoxin O1 superfamily. Expressed by the venom duct.

It is found in the secreted. The polypeptide is Conotoxin VnMKLT2-011 (Conus ventricosus (Mediterranean cone)).